The sequence spans 164 residues: Protein-export protein SecB (164 aa).

Belongs to the SecB family. As to quaternary structure, homotetramer, a dimer of dimers. One homotetramer interacts with 1 SecA dimer.

It is found in the cytoplasm. One of the proteins required for the normal export of preproteins out of the cell cytoplasm. It is a molecular chaperone that binds to a subset of precursor proteins, maintaining them in a translocation-competent state. It also specifically binds to its receptor SecA. This chain is Protein-export protein SecB, found in Ruegeria sp. (strain TM1040) (Silicibacter sp.).